The following is a 492-amino-acid chain: Cytochrome P450 2L1 (492 aa).

C436 is a heme binding site.

It belongs to the cytochrome P450 family. Heme is required as a cofactor.

It is found in the endoplasmic reticulum membrane. The protein resides in the microsome membrane. The enzyme catalyses an organic molecule + reduced [NADPH--hemoprotein reductase] + O2 = an alcohol + oxidized [NADPH--hemoprotein reductase] + H2O + H(+). Its function is as follows. Efficient in catalyzing the monooxygenation of benzphetamine, aminopyrine, benzo(a)pyrene, progesterone, and testosterone. The sequence is that of Cytochrome P450 2L1 (CYP2L1) from Panulirus argus (Caribbean spiny lobster).